Here is a 700-residue protein sequence, read N- to C-terminus: Protein no-on-transient A (700 aa).

The tract at residues 1–270 (MESAGKQDNN…GGGGPRGGED (270 aa)) is disordered. 2 stretches are compositionally biased toward low complexity: residues 9–29 (NNATQQLPQRQQRGNQQANKN) and 54–69 (GGPNAQNQNQNQNQNG). Residues 70 to 79 (GVTGGGGAVG) show a composition bias toward gly residues. Low complexity-rich tracts occupy residues 80–89 (GPNQNKNFGN), 96–124 (GNRNRNNNRAGNQNRTFPGNNNPNQKPNN), and 144–175 (AAAGQNQANQNANKGQNQRQGQNQNQNQVHGQ). Positions 176–208 (GNQGGPGNQGGAGNQGGQGNQGGAGNQGNGQGF) are enriched in gly residues. S236 is modified (phosphoserine). Residues 253 to 266 (MGGGGGGGGGGGPR) show a composition bias toward gly residues. RRM domains lie at 302 to 374 (NRLY…FAPN) and 376 to 457 (TILR…PMEV). Residues 505–616 (NLFKTKQDAL…AQQLNSLLDQ (112 aa)) adopt a coiled-coil conformation. The segment covering 568-582 (EMRKREEETMRRHQT) has biased composition (basic and acidic residues). 2 disordered regions span residues 568-591 (EMRKREEETMRRHQTEMQSHMNRQ) and 677-700 (MNQGGNQRGNNGGGNNVPWGRRRF). Residues 682–691 (NQRGNNGGGN) show a composition bias toward gly residues.

Functionally, required for normal vision and courtship behavior in Drosophila. The protein is Protein no-on-transient A (nonA) of Drosophila melanogaster (Fruit fly).